The primary structure comprises 309 residues: Protein FdhE homolog (309 aa).

The protein belongs to the FdhE family.

The protein resides in the cytoplasm. Its function is as follows. Necessary for formate dehydrogenase activity. This Klebsiella pneumoniae (strain 342) protein is Protein FdhE homolog.